The chain runs to 340 residues: Phosphoribosylformylglycinamidine cyclo-ligase (340 aa).

It belongs to the AIR synthase family.

The protein localises to the cytoplasm. The enzyme catalyses 2-formamido-N(1)-(5-O-phospho-beta-D-ribosyl)acetamidine + ATP = 5-amino-1-(5-phospho-beta-D-ribosyl)imidazole + ADP + phosphate + H(+). Its pathway is purine metabolism; IMP biosynthesis via de novo pathway; 5-amino-1-(5-phospho-D-ribosyl)imidazole from N(2)-formyl-N(1)-(5-phospho-D-ribosyl)glycinamide: step 2/2. The sequence is that of Phosphoribosylformylglycinamidine cyclo-ligase from Streptococcus uberis (strain ATCC BAA-854 / 0140J).